Reading from the N-terminus, the 461-residue chain is MKLWGGRFKKGTDKLVNDFNSSINVDSRMYKEDIEGSLAHASMLGNQNIISKEASDRITSGLLEILKRMDNGVIEIDETSEDIHSFVEGTLTYYIGEYGKMLHTGRSRNDQVTLDLRLYLKKAITSLKQDIIALEEVLLEKANENIGTIMPGYTHMQKAQPITFAHHLLAYAEMFKRDLGRLSDCYKRVDEMPLGSGALATSTYPIDREAVARDLGFSKVTLNSLDSVSDRDYAIETLSCLSMIMMHLSRFSEEIILWCTNEFSFIELDDGYSTGSSIMPQKKNPDVAELVRGKTGRVYGDLMTLLTVMKGIPLAYNKDMQEDKEALFDGLDTVVLSLKTFCGMIKTMKVKKENMRKGAGLGFTNATDVADYLVKKGMPFRNAHEVVGEIVLQCIKDNKMIEELTMEEFKNFSPTFEEDIYHAIDLLTCVEERKVIGGPSTESVKIQIEALKNFIAENKEV.

Belongs to the lyase 1 family. Argininosuccinate lyase subfamily.

Its subcellular location is the cytoplasm. It carries out the reaction 2-(N(omega)-L-arginino)succinate = fumarate + L-arginine. It participates in amino-acid biosynthesis; L-arginine biosynthesis; L-arginine from L-ornithine and carbamoyl phosphate: step 3/3. In Clostridium beijerinckii (strain ATCC 51743 / NCIMB 8052) (Clostridium acetobutylicum), this protein is Argininosuccinate lyase.